Consider the following 157-residue polypeptide: Probable succinate transporter subunit YjjB (157 aa).

5 helical membrane passes run 8 to 28, 34 to 54, 55 to 75, 87 to 107, and 129 to 149; these read LALM…AMVF, ALPW…LMMS, AGFN…SIGI, VFTV…TAMI, and FLKA…PGLW.

This sequence belongs to the ThrE exporter (TC 2.A.79) family. The transporter is composed of YjjB and YjjP.

It localises to the cell inner membrane. Involved in succinate export with YjjP. Both proteins are required for export. This is Probable succinate transporter subunit YjjB from Salmonella typhi.